The sequence spans 631 residues: tRNA uridine 5-carboxymethylaminomethyl modification enzyme MnmG (631 aa).

Residues 13–18 (GGGHAG), Val125, and Ser180 contribute to the FAD site. 273–287 (GPRYCPSIEDKVNRY) is a binding site for NAD(+). Gln370 serves as a coordination point for FAD.

The protein belongs to the MnmG family. In terms of assembly, homodimer. Heterotetramer of two MnmE and two MnmG subunits. The cofactor is FAD.

It localises to the cytoplasm. Its function is as follows. NAD-binding protein involved in the addition of a carboxymethylaminomethyl (cmnm) group at the wobble position (U34) of certain tRNAs, forming tRNA-cmnm(5)s(2)U34. This chain is tRNA uridine 5-carboxymethylaminomethyl modification enzyme MnmG, found in Alcanivorax borkumensis (strain ATCC 700651 / DSM 11573 / NCIMB 13689 / SK2).